We begin with the raw amino-acid sequence, 161 residues long: Phosphopantetheine adenylyltransferase (161 aa).

Threonine 10 contributes to the substrate binding site. ATP contacts are provided by residues 10 to 11 (TF) and histidine 18. Substrate contacts are provided by lysine 42, leucine 74, and arginine 88. ATP contacts are provided by residues 89–91 (GVR), glutamate 99, and 123–129 (YIHISST).

This sequence belongs to the bacterial CoaD family. As to quaternary structure, homohexamer. Mg(2+) serves as cofactor.

It is found in the cytoplasm. It carries out the reaction (R)-4'-phosphopantetheine + ATP + H(+) = 3'-dephospho-CoA + diphosphate. It participates in cofactor biosynthesis; coenzyme A biosynthesis; CoA from (R)-pantothenate: step 4/5. In terms of biological role, reversibly transfers an adenylyl group from ATP to 4'-phosphopantetheine, yielding dephospho-CoA (dPCoA) and pyrophosphate. This chain is Phosphopantetheine adenylyltransferase, found in Aquifex aeolicus (strain VF5).